The following is a 141-amino-acid chain: Large ribosomal subunit protein uL11 (141 aa).

The protein belongs to the universal ribosomal protein uL11 family. Part of the ribosomal stalk of the 50S ribosomal subunit. Interacts with L10 and the large rRNA to form the base of the stalk. L10 forms an elongated spine to which L12 dimers bind in a sequential fashion forming a multimeric L10(L12)X complex. One or more lysine residues are methylated.

Functionally, forms part of the ribosomal stalk which helps the ribosome interact with GTP-bound translation factors. This chain is Large ribosomal subunit protein uL11, found in Coprothermobacter proteolyticus (strain ATCC 35245 / DSM 5265 / OCM 4 / BT).